The chain runs to 559 residues: Pentatricopeptide repeat-containing protein At2g42920, chloroplastic (559 aa).

The N-terminal 14 residues, 1-14, are a transit peptide targeting the chloroplast; the sequence is MSPTILSFSGVTVP. PPR repeat units lie at residues 88-122, 125-159, 160-190, 191-221, 222-256, 257-291, 292-322, 323-357, 358-388, and 394-424; these read NPFVWNTIIRGFSRSSFPEMAISIFIDMLCSSPSV, QRLTYPSVFKAYGRLGQARDGRQLHGMVIKEGLED, DSFIRNTMLHMYVTCGCLIEAWRIFLGMIGF, DVVAWNSMIMGFAKCGLIDQAQNLFDEMPQR, NGVSWNSMISGFVRNGRFKDALDMFREMQEKDVKP, DGFTMVSLLNACAYLGASEQGRWIHEYIVRNRFEL, NSIVVTALIDMYCKCGCIEEGLNVFECAPKK, QLSCWNSMILGLANNGFEERAMDLFSELERSGLEP, DSVSFIGVLTACAHSGEVHRADEFFRLMKEK, and SIKHYTLMVNVLGGAGLLEEAEALIKNMPVE. The interval 429–504 is type E motif; sequence IWSSLLSACR…EVGCSSIEVD (76 aa). Positions 505–535 are type E(+) motif; the sequence is FEVHEFISCGGTHPKSAEIYSLLDILNWDVS.

Belongs to the PPR family. PCMP-E subfamily.

The protein resides in the plastid. The protein localises to the chloroplast. The polypeptide is Pentatricopeptide repeat-containing protein At2g42920, chloroplastic (PCMP-E75) (Arabidopsis thaliana (Mouse-ear cress)).